The primary structure comprises 1159 residues: DNA-directed RNA polymerase subunit beta (1159 aa).

This sequence belongs to the RNA polymerase beta chain family. The RNAP catalytic core consists of 2 alpha, 1 beta, 1 beta' and 1 omega subunit. When a sigma factor is associated with the core the holoenzyme is formed, which can initiate transcription.

It catalyses the reaction RNA(n) + a ribonucleoside 5'-triphosphate = RNA(n+1) + diphosphate. DNA-dependent RNA polymerase catalyzes the transcription of DNA into RNA using the four ribonucleoside triphosphates as substrates. This is DNA-directed RNA polymerase subunit beta from Deinococcus radiodurans (strain ATCC 13939 / DSM 20539 / JCM 16871 / CCUG 27074 / LMG 4051 / NBRC 15346 / NCIMB 9279 / VKM B-1422 / R1).